The following is a 152-amino-acid chain: Large ribosomal subunit protein bL9 (152 aa).

Belongs to the bacterial ribosomal protein bL9 family.

Functionally, binds to the 23S rRNA. The chain is Large ribosomal subunit protein bL9 from Synechococcus sp. (strain CC9311).